Here is a 337-residue protein sequence, read N- to C-terminus: tRNA N6-adenosine threonylcarbamoyltransferase (337 aa).

Positions 111 and 115 each coordinate Fe cation. Residues 134-138 (LVSGG), Asp167, Gly180, and Asn272 contribute to the substrate site. Asp300 provides a ligand contact to Fe cation.

The protein belongs to the KAE1 / TsaD family. Fe(2+) is required as a cofactor.

It localises to the cytoplasm. It carries out the reaction L-threonylcarbamoyladenylate + adenosine(37) in tRNA = N(6)-L-threonylcarbamoyladenosine(37) in tRNA + AMP + H(+). Required for the formation of a threonylcarbamoyl group on adenosine at position 37 (t(6)A37) in tRNAs that read codons beginning with adenine. Is involved in the transfer of the threonylcarbamoyl moiety of threonylcarbamoyl-AMP (TC-AMP) to the N6 group of A37, together with TsaE and TsaB. TsaD likely plays a direct catalytic role in this reaction. The protein is tRNA N6-adenosine threonylcarbamoyltransferase of Aeromonas salmonicida (strain A449).